A 732-amino-acid chain; its full sequence is Protein FAR1-RELATED SEQUENCE 4 (732 aa).

The FAR1 domain maps to 11 to 97 (LFYKDYAKSV…VKEHNHDLLP (87 aa)). One can recognise an MULE domain in the interval 212-308 (VVSFETSYFV…CLWHVLDQLP (97 aa)). The segment at 490-526 (YLVDWDEFKSDIYCSCRSFEYKGYLCRHAIVVLQMSG) adopts an SWIM-type zinc-finger fold. A disordered region spans residues 623–683 (QEENQYGSTS…ETVGEGSQEG (61 aa)). Over residues 624–635 (EENQYGSTSTQI) the composition is skewed to polar residues.

The protein belongs to the FHY3/FAR1 family. In terms of tissue distribution, expressed in hypocotyls, rosette and cauline leaves, inflorescences stems, flowers and siliques.

The protein localises to the nucleus. In terms of biological role, putative transcription activator involved in regulating light control of development. The chain is Protein FAR1-RELATED SEQUENCE 4 (FRS4) from Arabidopsis thaliana (Mouse-ear cress).